The following is a 242-amino-acid chain: Sugar fermentation stimulation protein homolog (242 aa).

This sequence belongs to the SfsA family.

The chain is Sugar fermentation stimulation protein homolog from Rippkaea orientalis (strain PCC 8801 / RF-1) (Cyanothece sp. (strain PCC 8801)).